Reading from the N-terminus, the 353-residue chain is Photosystem II D2 protein (353 aa).

An N-acetylthreonine modification is found at Thr-2. Thr-2 carries the phosphothreonine modification. The chain crosses the membrane as a helical span at residues 41 to 61 (CAYFALGGWFTGTTFVTSWYT). Residue His-118 coordinates chlorophyll a. A helical membrane pass occupies residues 125–141 (GFMLRQFELARSVQLRP). Pheophytin a contacts are provided by Gln-130 and Asn-143. The chain crosses the membrane as a helical span at residues 153-166 (VFVSVFLIYPLGQS). His-198 contributes to the chlorophyll a binding site. Residues 208–228 (AALLCAIHGATVENTLFEDGD) traverse the membrane as a helical segment. Residues His-215 and Phe-262 each contribute to the a plastoquinone site. Residue His-215 participates in Fe cation binding. His-269 contributes to the Fe cation binding site. A helical membrane pass occupies residues 279 to 295 (GSWMSAIGVVGLALNLR).

This sequence belongs to the reaction center PufL/M/PsbA/D family. PSII is composed of 1 copy each of membrane proteins PsbA, PsbB, PsbC, PsbD, PsbE, PsbF, PsbH, PsbI, PsbJ, PsbK, PsbL, PsbM, PsbT, PsbX, PsbY, PsbZ, Psb30/Ycf12, at least 3 peripheral proteins of the oxygen-evolving complex and a large number of cofactors. It forms dimeric complexes. The cofactor is The D1/D2 heterodimer binds P680, chlorophylls that are the primary electron donor of PSII, and subsequent electron acceptors. It shares a non-heme iron and each subunit binds pheophytin, quinone, additional chlorophylls, carotenoids and lipids. There is also a Cl(-1) ion associated with D1 and D2, which is required for oxygen evolution. The PSII complex binds additional chlorophylls, carotenoids and specific lipids..

It is found in the plastid. Its subcellular location is the chloroplast thylakoid membrane. The catalysed reaction is 2 a plastoquinone + 4 hnu + 2 H2O = 2 a plastoquinol + O2. Its function is as follows. Photosystem II (PSII) is a light-driven water:plastoquinone oxidoreductase that uses light energy to abstract electrons from H(2)O, generating O(2) and a proton gradient subsequently used for ATP formation. It consists of a core antenna complex that captures photons, and an electron transfer chain that converts photonic excitation into a charge separation. The D1/D2 (PsbA/PsbD) reaction center heterodimer binds P680, the primary electron donor of PSII as well as several subsequent electron acceptors. D2 is needed for assembly of a stable PSII complex. The polypeptide is Photosystem II D2 protein (Pinus koraiensis (Korean pine)).